Reading from the N-terminus, the 1350-residue chain is Ubiquitin carboxyl-terminal hydrolase 47 (1350 aa).

The disordered stretch occupies residues 111 to 138 (DGEQPQLTSDESGTADSSGLDDSSQEKF). Positions 115–132 (PQLTSDESGTADSSGLDD) are enriched in polar residues. Positions 173-548 (VGLVNQAMTC…NAYMLMYRLK (376 aa)) constitute a USP domain. Catalysis depends on Cys-182, which acts as the Nucleophile. The segment at 409–437 (EDEKSPQTDSCTDSGAENEGSCHSDQMSN) is disordered. A compositionally biased stretch (polar residues) spans 415–437 (QTDSCTDSGAENEGSCHSDQMSN). Residue His-487 is the Proton acceptor of the active site. 2 disordered regions span residues 815-836 (HPRPTARSVGPKGGGDMNPQED) and 859-1000 (SLQQ…ESGK). The segment covering 859-877 (SLQQHQDGGNGDSSKSTEG) has biased composition (polar residues). The segment covering 916–926 (PEERSDSDVNN) has biased composition (basic and acidic residues). The span at 929–945 (STSSVDSDILSSSHSSD) shows a compositional bias: low complexity. Residues 973-982 (KANDGKKETW) are compositionally biased toward basic and acidic residues. Acidic residues predominate over residues 983–996 (DTAEEDSGTDSEYD).

The protein belongs to the peptidase C19 family. USP47 subfamily.

The protein resides in the cytoplasm. The enzyme catalyses Thiol-dependent hydrolysis of ester, thioester, amide, peptide and isopeptide bonds formed by the C-terminal Gly of ubiquitin (a 76-residue protein attached to proteins as an intracellular targeting signal).. Functionally, ubiquitin-specific protease that specifically deubiquitinates monoubiquitinated DNA polymerase beta (polb), stabilizing polb thereby playing a role in base-excision repair (BER). The protein is Ubiquitin carboxyl-terminal hydrolase 47 (usp47) of Xenopus laevis (African clawed frog).